The sequence spans 37 residues: MKVKPSVKKICDKCKVIRRHGRVMVICQNLRHKQRQG.

Belongs to the bacterial ribosomal protein bL36 family.

The sequence is that of Large ribosomal subunit protein bL36 from Acidothermus cellulolyticus (strain ATCC 43068 / DSM 8971 / 11B).